Here is a 730-residue protein sequence, read N- to C-terminus: MSTEYPLVGSPETSEYPKYECSLCLKRYKRREHLFRHIGSHTSQRPYQCNSCDGAFQRADVLKRHLRTCDGGASRASTRRRACDRCVRQKKACSSHQPCHSCAKKGAQCLYSTDTGYSSRLSQHSSTNHTPKDQELSTQFTNPPPPPSTSTFNTMMPWGLTMEDLQNFGTSPTNTFFDPASMQYTSPTLPDFSVLPFEGPATFETPVSSDPPRKSLHFLDKFTSNTGLVSSFDCGTHEQREQIAARLDQQILSELQQRIMSMPALGMDIPSPLIMENNSDTSSTSDLPLDWFNDPLSLKTHEILLLVEEVVTIKPRNSSVALDWSSTLRDACLQFFSPSNIRRFLGFYWAIWHPNVNFVHRPTFDMLAAKPTLLAAMALIGACVSPDMPDNEDARTWFNCVEEMVFIDDDFNSDLTYQYSGNIAIQRRKIQAVQAAYIVCLYQNWEGADASKSRIRRYRFATLVSTARDIGITAARHLNYSELGRHEFEWKEYEAREELIRLFTWIFLLDSAFVIFNNLPPRMVIKEIRMHMATPEACFQATTADECHHQLHLFLPARTLYWTTSFRGSFESLCKDDLSVNIRHLLATLGPLNLFALTSAIHSQIFQFRSAVGSFQLRAPIQNALSNWRDIWQLFSSTFPQGITPHMTIEDPHIQPEELWKRMGFFRYAPEYWLLAHLMADRLAVLGTSKPENELEPLDEGPLDPILNRYDQTSMRQVNDLIMGFQTFQI.

The segment at 19 to 41 adopts a C2H2-type 1 zinc-finger fold; that stretch reads YECSLCLKRYKRREHLFRHIGSH. The segment at 47 to 69 adopts a C2H2-type 2; atypical zinc-finger fold; that stretch reads YQCNSCDGAFQRADVLKRHLRTC. The zn(2)-C6 fungal-type DNA-binding region spans 83–109; the sequence is CDRCVRQKKACSSHQPCHSCAKKGAQC. Over residues 120–129 the composition is skewed to polar residues; the sequence is RLSQHSSTNH. The tract at residues 120–151 is disordered; that stretch reads RLSQHSSTNHTPKDQELSTQFTNPPPPPSTST.

Its subcellular location is the nucleus. In terms of biological role, transcription factor; part of the gene cluster that mediates the biosynthesis of the neurotoxin verrucosidin, a methylated alpha-pyrone polyketide that inhibits oxidative phosphorylation in mitochondria and thereby causes neurological diseases. The protein is Transcription factor verF of Penicillium polonicum.